Consider the following 430-residue polypeptide: Enolase (430 aa).

Residue glutamine 164 coordinates (2R)-2-phosphoglycerate. Glutamate 206 acts as the Proton donor in catalysis. Positions 243, 288, and 315 each coordinate Mg(2+). 4 residues coordinate (2R)-2-phosphoglycerate: lysine 340, arginine 369, serine 370, and lysine 391. Lysine 340 functions as the Proton acceptor in the catalytic mechanism.

It belongs to the enolase family. The cofactor is Mg(2+).

It localises to the cytoplasm. It is found in the secreted. The protein localises to the cell surface. It carries out the reaction (2R)-2-phosphoglycerate = phosphoenolpyruvate + H2O. It participates in carbohydrate degradation; glycolysis; pyruvate from D-glyceraldehyde 3-phosphate: step 4/5. Catalyzes the reversible conversion of 2-phosphoglycerate (2-PG) into phosphoenolpyruvate (PEP). It is essential for the degradation of carbohydrates via glycolysis. The polypeptide is Enolase (Lysinibacillus sphaericus (strain C3-41)).